The primary structure comprises 360 residues: Protein NDRG2 (360 aa).

The interval 325–360 is disordered; the sequence is RTASLSSEGNRSRSRTLSQSSESGGGPPAPLAEVTC.

Belongs to the NDRG family.

The protein resides in the cytoplasm. Contributes to the regulation of the Wnt signaling pathway. Down-regulates CTNNB1-mediated transcriptional activation of target genes. May be involved in neuron differentiation. In Xenopus tropicalis (Western clawed frog), this protein is Protein NDRG2.